A 380-amino-acid polypeptide reads, in one-letter code: Homoserine O-acetyltransferase (380 aa).

An AB hydrolase-1 domain is found at 70–366; that stretch reads NAVLVFHALT…SPHGHDAFLI (297 aa). Ser-186 (nucleophile) is an active-site residue. Arg-250 contributes to the substrate binding site. Catalysis depends on residues Asp-333 and His-361. Residue Asp-362 coordinates substrate.

Belongs to the AB hydrolase superfamily. MetX family. Homodimer.

It localises to the cytoplasm. The catalysed reaction is L-homoserine + acetyl-CoA = O-acetyl-L-homoserine + CoA. It participates in amino-acid biosynthesis; L-methionine biosynthesis via de novo pathway; O-acetyl-L-homoserine from L-homoserine: step 1/1. Its function is as follows. Transfers an acetyl group from acetyl-CoA to L-homoserine, forming acetyl-L-homoserine. The polypeptide is Homoserine O-acetyltransferase (Thermus thermophilus (strain ATCC 27634 / DSM 579 / HB8)).